Consider the following 151-residue polypeptide: Deoxyuridine 5'-triphosphate nucleotidohydrolase (151 aa).

Residues 70–72 (RSG), Asn-83, 87–89 (LID), and Met-97 contribute to the substrate site.

It belongs to the dUTPase family. It depends on Mg(2+) as a cofactor.

It carries out the reaction dUTP + H2O = dUMP + diphosphate + H(+). It participates in pyrimidine metabolism; dUMP biosynthesis; dUMP from dCTP (dUTP route): step 2/2. In terms of biological role, this enzyme is involved in nucleotide metabolism: it produces dUMP, the immediate precursor of thymidine nucleotides and it decreases the intracellular concentration of dUTP so that uracil cannot be incorporated into DNA. The protein is Deoxyuridine 5'-triphosphate nucleotidohydrolase of Stutzerimonas stutzeri (strain A1501) (Pseudomonas stutzeri).